The chain runs to 250 residues: Small ribosomal subunit protein uS2 (250 aa).

This sequence belongs to the universal ribosomal protein uS2 family.

The protein is Small ribosomal subunit protein uS2 of Teredinibacter turnerae (strain ATCC 39867 / T7901).